The chain runs to 100 residues: Co-chaperonin GroES (100 aa).

The protein belongs to the GroES chaperonin family. As to quaternary structure, heptamer of 7 subunits arranged in a ring. Interacts with the chaperonin GroEL.

It is found in the cytoplasm. Functionally, together with the chaperonin GroEL, plays an essential role in assisting protein folding. The GroEL-GroES system forms a nano-cage that allows encapsulation of the non-native substrate proteins and provides a physical environment optimized to promote and accelerate protein folding. GroES binds to the apical surface of the GroEL ring, thereby capping the opening of the GroEL channel. In Nocardia farcinica (strain IFM 10152), this protein is Co-chaperonin GroES.